Consider the following 278-residue polypeptide: MADQYEKRITWTIKNFSSLQSHAIYFDIFVVGDTKWHLLAYPKGYGDSINKCLSLFLGVPDPDDLPSGWKRHIIYRLTVVNQMSEKLSKQEVARGGFYPRSLTFGSQVMLPLTELYGGFLVSGQVKIVAEVGVLEVVGKSDVLEETLLVNGGINVNGFQVLPSQVESVNNLFKNHPDIASNFRLENTHLRTTYLNSLLCLTELLCQSPHKLSNVDLANAHCTLTCVTKAGFKLDWLEKKLKEVGKTRMQQLEQNLKDLKESLCWSSDDEDDLSRSVKT.

The MATH domain occupies 6–131 (EKRITWTIKN…SGQVKIVAEV (126 aa)). Positions 232-267 (KLDWLEKKLKEVGKTRMQQLEQNLKDLKESLCWSSD) form a coiled coil.

The protein is MATH domain and coiled-coil domain-containing protein At1g31400 of Arabidopsis thaliana (Mouse-ear cress).